The primary structure comprises 861 residues: Leucine--tRNA ligase (861 aa).

Residues 42–52 (PYPSGRLHMGH) carry the 'HIGH' region motif. Residues 619-623 (KMSKS) carry the 'KMSKS' region motif. K622 contacts ATP.

It belongs to the class-I aminoacyl-tRNA synthetase family.

Its subcellular location is the cytoplasm. It carries out the reaction tRNA(Leu) + L-leucine + ATP = L-leucyl-tRNA(Leu) + AMP + diphosphate. This is Leucine--tRNA ligase from Haemophilus influenzae (strain PittEE).